A 356-amino-acid polypeptide reads, in one-letter code: N-methyltransferase 4 (356 aa).

S-adenosyl-L-methionine contacts are provided by residues 93-94 (QS), 128-136 (ILDIGCGFG), and 155-160 (TNSAEQ).

Belongs to the CFA/CMAS family. Expressed in stems, roots, flower buds and leaves.

Probable N-methyltransferase not involved in benzylisoquinoline metabolism. Shows no detectable activity with (s)-coclaurine, (R)- or (S)-reticuline, papaverine or (R,S)-tetrahydropapaverine. This Papaver somniferum (Opium poppy) protein is N-methyltransferase 4 (NMT4).